We begin with the raw amino-acid sequence, 270 residues long: DNA repair protein RecO (270 aa).

The disordered stretch occupies residues 202-221; it reads PELPPSTIDADTDNPSQPPS.

Belongs to the RecO family.

Involved in DNA repair and RecF pathway recombination. This chain is DNA repair protein RecO, found in Rhodopirellula baltica (strain DSM 10527 / NCIMB 13988 / SH1).